The primary structure comprises 844 residues: 3',5'-cyclic-AMP phosphodiesterase 4A (844 aa).

The tract at residues 1 to 124 is disordered; that stretch reads MEPPAAPSER…RSPLDSQASP (124 aa). Residue Ser-13 is modified to Phosphoserine. Low complexity predominate over residues 36-46; sequence QPRTPIRIQQR. Positions 51-78 are enriched in basic and acidic residues; that stretch reads SAERSEPERSPHRPIERADAVDTGDRPG. The span at 82-91 shows a compositional bias: polar residues; the sequence is TRMSWPSSFH. Phosphoserine occurs at positions 147, 152, 160, 204, and 333. Residues 343–672 form the PDEase domain; it reads VKTDQEDLLA…DWYHSAIRQS (330 aa). Residue Lys-344 forms a Glycyl lysine isopeptide (Lys-Gly) (interchain with G-Cter in SUMO) linkage. Catalysis depends on His-419, which acts as the Proton donor. His-419 is a binding site for 3',5'-cyclic AMP. AMP-binding residues include His-419 and His-423. 4 residues coordinate Zn(2+): His-423, His-459, Asp-460, and Asp-577. Positions 460, 577, 628, and 631 each coordinate AMP. Asp-460 is a Mg(2+) binding site. Asp-460 is a binding site for Mn(2+). The 3',5'-cyclic AMP site is built by Gln-628 and Phe-631. A phosphoserine mark is found at Ser-672 and Ser-674. The disordered stretch occupies residues 819-844; the sequence is ACSGTSGDNSAVISAPGRWGSGGDPA. Positions 820–830 are enriched in polar residues; the sequence is CSGTSGDNSAV.

It belongs to the cyclic nucleotide phosphodiesterase family. PDE4 subfamily. As to quaternary structure, interacts with LYN (via SH3 domain). Interacts with ARRB2. Zn(2+) is required as a cofactor. Mg(2+) serves as cofactor. The cofactor is Mn(2+). Proteolytically cleaved by CASP3.

The protein localises to the cytoplasm. Its subcellular location is the cytosol. The protein resides in the membrane. It catalyses the reaction 3',5'-cyclic AMP + H2O = AMP + H(+). It functions in the pathway purine metabolism; 3',5'-cyclic AMP degradation; AMP from 3',5'-cyclic AMP: step 1/1. Its activity is regulated as follows. Inhibited by rolipram and diazepam. Its function is as follows. Hydrolyzes the second messenger 3',5'-cyclic AMP (cAMP), which is a key regulator of many important physiological processes. In terms of biological role, efficiently hydrolyzes cAMP. The polypeptide is 3',5'-cyclic-AMP phosphodiesterase 4A (Pde4a) (Mus musculus (Mouse)).